Consider the following 192-residue polypeptide: Small ribosomal subunit protein eS7 (192 aa).

It belongs to the eukaryotic ribosomal protein eS7 family.

The chain is Small ribosomal subunit protein eS7 (RpS7) from Anopheles gambiae (African malaria mosquito).